A 153-amino-acid chain; its full sequence is Vasotocin-neurophysin VT 1 (153 aa).

A signal peptide spans 1 to 20 (MPYSTFPLLWVLGLLALSSA). Cys21 and Cys26 form a disulfide bridge. Gly29 bears the Glycine amide mark. Intrachain disulfides connect Cys41–Cys85, Cys44–Cys58, Cys52–Cys75, Cys59–Cys65, Cys92–Cys104, Cys98–Cys116, and Cys105–Cys110.

This sequence belongs to the vasopressin/oxytocin family. Seven disulfide bonds are present in neurophysin.

Its subcellular location is the secreted. Vasotocin is an antidiuretic hormone. This is Vasotocin-neurophysin VT 1 from Oncorhynchus keta (Chum salmon).